The following is a 98-amino-acid chain: MPSISININLAFAAALLGMLMFRSHMMSSLLCLEGMMLSMFTLSTLTILNMQFTMSFTMPILLLVFAACEAAIGLALLVMVSNNYGLDYIQNLNLLQC.

3 helical membrane passes run 2–22 (PSIS…MLMF), 29–49 (SLLC…LTIL), and 61–81 (ILLL…LVMV).

Belongs to the complex I subunit 4L family. In terms of assembly, core subunit of respiratory chain NADH dehydrogenase (Complex I) which is composed of 45 different subunits.

It is found in the mitochondrion inner membrane. The catalysed reaction is a ubiquinone + NADH + 5 H(+)(in) = a ubiquinol + NAD(+) + 4 H(+)(out). Functionally, core subunit of the mitochondrial membrane respiratory chain NADH dehydrogenase (Complex I) which catalyzes electron transfer from NADH through the respiratory chain, using ubiquinone as an electron acceptor. Part of the enzyme membrane arm which is embedded in the lipid bilayer and involved in proton translocation. This chain is NADH-ubiquinone oxidoreductase chain 4L (MT-ND4L), found in Microcebus mittermeieri (Mittermeier's mouse lemur).